The primary structure comprises 93 residues: Protein IDA-LIKE 4 (93 aa).

The N-terminal stretch at 1–35 (MYPTRPHYWRRRLSINRPQAFLLLILCLFFIHHCD) is a signal peptide.

In terms of tissue distribution, expressed in mainly in buds. Lower levels in roots. Detected at the base of pedicel, in the floral and funicule abscission zones, in vascular tissues, in guard cells of young seedlings and in hydathodes.

The protein localises to the secreted. It localises to the extracellular space. Its function is as follows. May be involved in floral abscission. The chain is Protein IDA-LIKE 4 (IDL4) from Arabidopsis thaliana (Mouse-ear cress).